We begin with the raw amino-acid sequence, 559 residues long: Hepatocyte nuclear factor 1-alpha (559 aa).

An HNF-p1 domain is found at 13–44; it reads GPGRLSALQEQLIWALLGSGLSREVLVHALGE. Positions 14–43 are dimerization; the sequence is PGRLSALQEQLIWALLGSGLSREVLVHALG. Over residues 49–62 the composition is skewed to basic and acidic residues; sequence RVTPGAEKGDRGDG. Positions 49 to 73 are disordered; that stretch reads RVTPGAEKGDRGDGESSEEGEMDFP. The region spanning 78–173 is the POU-specific atypical domain; the sequence is QELEALAPEE…ISQQFTNARH (96 aa). Interaction with DNA stretches follow at residues 121–123, 134–140, 146–149, 192–195, 252–254, and 259–262; these read QRE, HLSQHLN, KNQK, RFKW, RVY, and NRRK. The Nuclear localization signal signature appears at 186–194; sequence RKGRRNRFK. Residues 188 to 268 constitute a DNA-binding region (homeobox; HNF1-type); it reads GRRNRFKWGP…NRRKEEAFRH (81 aa). The interval 492–559 is disordered; it reads TDPEEQTDQP…IPAQMVSTAQ (68 aa). Positions 499–522 are enriched in polar residues; it reads DQPIQEDSLHLQSPSPVPVSSGNL.

Belongs to the HNF1 homeobox family. In terms of assembly, binds DNA as a dimer. As to expression, expressed in liver, intestine, spleen and kidney.

It localises to the nucleus. Its function is as follows. Transcriptional activator that regulates the tissue specific expression of multiple genes, especially in pancreas and liver. Binds to the promoter of the albumin gene. This is Hepatocyte nuclear factor 1-alpha (hnf1a) from Salmo salar (Atlantic salmon).